A 549-amino-acid polypeptide reads, in one-letter code: Probable protein kinase UbiB (549 aa).

The Protein kinase domain maps to Asp-123–Leu-501. ATP-binding positions include Leu-129–Val-137 and Lys-152. Asp-287 (proton acceptor) is an active-site residue. The next 2 membrane-spanning stretches (helical) occupy residues Ser-498–Gln-518 and Ala-520–Trp-540.

It belongs to the ABC1 family. UbiB subfamily.

It is found in the cell inner membrane. It functions in the pathway cofactor biosynthesis; ubiquinone biosynthesis [regulation]. In terms of biological role, is probably a protein kinase regulator of UbiI activity which is involved in aerobic coenzyme Q (ubiquinone) biosynthesis. This is Probable protein kinase UbiB from Shewanella pealeana (strain ATCC 700345 / ANG-SQ1).